The primary structure comprises 523 residues: UDP-glucuronosyltransferase 3A2 (523 aa).

The first 22 residues, 1 to 22, serve as a signal peptide directing secretion; it reads MAGQRVLLLVGFLLPGVLLSEA. The Extracellular segment spans residues 23–483; it reads AKILTISTVG…YVFQQPWHEQ (461 aa). N-linked (GlcNAc...) asparagine glycosylation occurs at asparagine 52. Residues 484-504 form a helical membrane-spanning segment; the sequence is YLLDVFVFLLGLTLGTLWLCG. Topologically, residues 505-523 are cytoplasmic; it reads KLLGMAVWWLRGARKVKET.

Belongs to the UDP-glycosyltransferase family.

The protein resides in the membrane. The catalysed reaction is glucuronate acceptor + UDP-alpha-D-glucuronate = acceptor beta-D-glucuronoside + UDP + H(+). Its function is as follows. UDP-glucuronosyltransferases catalyze phase II biotransformation reactions in which lipophilic substrates are conjugated with glucuronic acid to increase water solubility and enhance excretion. They are of major importance in the conjugation and subsequent elimination of potentially toxic xenobiotics and endogenous compounds. The chain is UDP-glucuronosyltransferase 3A2 (UGT3A2) from Homo sapiens (Human).